A 211-amino-acid chain; its full sequence is BAG family molecular chaperone regulator 2 (211 aa).

Residue Ala-2 is modified to N-acetylalanine. Residues Ser-20, Ser-31, and Ser-73 each carry the phosphoserine modification. Residues 20–61 (SMADRSSRLLESLDQLELRVEALREAATAVEQEKEVLLEMIH) are a coiled coil. One can recognise a BAG domain in the interval 109 to 189 (SLKHATRIID…NIENADKAIK (81 aa)).

As to quaternary structure, binds to the ATPase domain of HSP/HSC70 chaperones. May interact with NWD1. Interacts with HSPA1A (via NBD), HSPA1B (via NBD) and HSPA8. May interact with DNJC9; the interaction seems to be histone-dependent.

Functionally, co-chaperone for HSP70 and HSC70 chaperone proteins. Acts as a nucleotide-exchange factor (NEF) promoting the release of ADP from the HSP70 and HSC70 proteins thereby triggering client/substrate protein release. The chain is BAG family molecular chaperone regulator 2 from Bos taurus (Bovine).